We begin with the raw amino-acid sequence, 961 residues long: Leucine-rich repeat-containing protein egg-6 (961 aa).

Residues methionine 1 to serine 18 form the signal peptide. At alanine 19–arginine 854 the chain is on the extracellular side. LRR repeat units lie at residues isoleucine 60–phenylalanine 78, asparagine 79–histidine 101, glutamate 103–asparagine 124, leucine 125–glycine 148, serine 150–alanine 172, lysine 174–asparagine 197, alanine 199–leucine 222, proline 223–asparagine 245, proline 247–glycine 269, phenylalanine 270–asparagine 294, isoleucine 305–asparagine 316, proline 317–serine 339, leucine 340–glycine 363, methionine 364–glutamine 387, leucine 388–lysine 411, serine 413–lysine 435, and isoleucine 437–glutamate 455. A helical transmembrane segment spans residues isoleucine 855–phenylalanine 875. The Cytoplasmic segment spans residues valine 876–histidine 961. A disordered region spans residues valine 890–glutamine 943. The span at serine 893–glycine 902 shows a compositional bias: low complexity. The span at lysine 928–glutamine 943 shows a compositional bias: polar residues.

In terms of tissue distribution, in L1 larvae, expressed in a subset of epithelial cells including epidermal, vulval and rectal cells and the excretory duct and pore. Also detected in some neurons. Absent from internal epithelia such as the gut and pharyngeal tubes.

Its subcellular location is the apical cell membrane. In terms of biological role, required for apical extracellular matrix organization and epithelial junction maintenance. The chain is Leucine-rich repeat-containing protein egg-6 from Caenorhabditis elegans.